Here is a 208-residue protein sequence, read N- to C-terminus: Large ribosomal subunit protein uL4 (208 aa).

Residues 45–77 (RQGTHKAKERAEIKGSTRKIKKQKGTGTARAGS) are disordered.

It belongs to the universal ribosomal protein uL4 family. Part of the 50S ribosomal subunit.

Functionally, one of the primary rRNA binding proteins, this protein initially binds near the 5'-end of the 23S rRNA. It is important during the early stages of 50S assembly. It makes multiple contacts with different domains of the 23S rRNA in the assembled 50S subunit and ribosome. Its function is as follows. Forms part of the polypeptide exit tunnel. This Christiangramia forsetii (strain DSM 17595 / CGMCC 1.15422 / KT0803) (Gramella forsetii) protein is Large ribosomal subunit protein uL4.